The sequence spans 320 residues: MTTEQTISANVQFFTISDDEAGQRLDNFLLAKLKGVPKSLIYRIVRKGEVRVNKGRVKPDYKLQHNDIVRIPLVRVTPKNEAPISTKLNKVAELEQHILYEDDVMLVLNKPSGIGVHGGSGLSFGVIEALRALRPQARFLELVHRIDRDTSGILLVAKKRSALRALHEQLREKVVQKDYLALVRGQWQAHINVIKAPLLKNELQSGERIVKVSEQGKPSETRFSIEERYPNATLIKASPITGRTHQIRVHTQYAGHPIACDDRYGDQAFDAKLKQAGLNRLFLHAHSIRFEHPKTAEQMFITAPLDHHLKTILAKLRAEK.

The S4 RNA-binding domain occupies 23–95 (QRLDNFLLAK…TKLNKVAELE (73 aa)). Asp147 is a catalytic residue.

Belongs to the pseudouridine synthase RluA family.

The catalysed reaction is uridine(955/2504/2580) in 23S rRNA = pseudouridine(955/2504/2580) in 23S rRNA. Its function is as follows. Responsible for synthesis of pseudouridine from uracil at positions 955, 2504 and 2580 in 23S ribosomal RNA. In Haemophilus ducreyi (strain 35000HP / ATCC 700724), this protein is Ribosomal large subunit pseudouridine synthase C (rluC).